Consider the following 227-residue polypeptide: Protein Saci_0792 (227 aa).

Residues 15–209 (DIGKQLIKIA…EINKNTDEII (195 aa)) enclose the AMMECR1 domain.

The chain is Protein Saci_0792 from Sulfolobus acidocaldarius (strain ATCC 33909 / DSM 639 / JCM 8929 / NBRC 15157 / NCIMB 11770).